Here is a 230-residue protein sequence, read N- to C-terminus: Flagellar L-ring protein (230 aa).

The N-terminal stretch at 1–18 (MNRLNIAVSCLATALLFG) is a signal peptide. Cys-19 carries the N-palmitoyl cysteine lipid modification. The S-diacylglycerol cysteine moiety is linked to residue Cys-19.

The protein belongs to the FlgH family. As to quaternary structure, the basal body constitutes a major portion of the flagellar organelle and consists of four rings (L,P,S, and M) mounted on a central rod.

The protein localises to the cell outer membrane. It localises to the bacterial flagellum basal body. Assembles around the rod to form the L-ring and probably protects the motor/basal body from shearing forces during rotation. This Legionella pneumophila (strain Paris) protein is Flagellar L-ring protein.